We begin with the raw amino-acid sequence, 125 residues long: MASSILLTLITFIFLSSLSLSSPTTNTIPSSQTISPSEEKISPEIAPLLPSPAVSSTQTIPSSSTLPEPENDDVSADPDPAFAPSASPPASSLASLSSQAPGVFIYFVFAAVYCFSLRLLAVSAI.

Positions Met-1–Ser-21 are cleaved as a signal peptide. A compositionally biased stretch (low complexity) spans Leu-20 to Pro-36. Residues Leu-20–Ser-95 form a disordered region. Positions Ala-53–Leu-66 are enriched in polar residues. The span at Asp-77–Ser-95 shows a compositional bias: low complexity. Residue Ser-98 is the site of GPI-anchor amidated serine attachment. A propeptide spans Gln-99–Ile-125 (removed in mature form).

The protein belongs to the classical AGP family. In terms of processing, O-glycosylated on the hydroxyproline residues.

The protein resides in the cell membrane. Functionally, proteoglycan that seems to be implicated in diverse developmental roles such as differentiation, cell-cell recognition, embryogenesis and programmed cell death. The polypeptide is Classical arabinogalactan protein 27 (AGP27) (Arabidopsis thaliana (Mouse-ear cress)).